Reading from the N-terminus, the 848-residue chain is Adenylate cyclase (848 aa).

A catalytic region spans residues 1–535; that stretch reads MYLYIETLKQ…DVSHHFPLRL (535 aa). The interval 541 to 848 is regulatory; sequence KALYSPCEIR…DTPLLQQYFS (308 aa). The residue at position 609 (His609) is a Phosphohistidine; by CRR.

It belongs to the adenylyl cyclase class-1 family.

It is found in the cytoplasm. The enzyme catalyses ATP = 3',5'-cyclic AMP + diphosphate. The chain is Adenylate cyclase (cyaA) from Escherichia coli O157:H7.